A 557-amino-acid polypeptide reads, in one-letter code: uncharacterized protein (557 aa).

One can recognise a Helicase ATP-binding domain in the interval Lys70 to Gly224. Ala82 to Thr90 is a binding site for ATP. The DEAH box signature appears at Asp175–His178. The Helicase C-terminal domain maps to Gln363–Leu524.

The protein belongs to the SNF2/RAD54 helicase family.

This is an uncharacterized protein from Bacillus subtilis (strain 168).